Here is a 361-residue protein sequence, read N- to C-terminus: Chorismate synthase (361 aa).

Residues arginine 48 and arginine 54 each contribute to the NADP(+) site. FMN contacts are provided by residues arginine 131–serine 133, asparagine 243–alanine 244, glycine 287, lysine 302–serine 306, and arginine 328.

Belongs to the chorismate synthase family. In terms of assembly, homotetramer. FMNH2 is required as a cofactor.

The catalysed reaction is 5-O-(1-carboxyvinyl)-3-phosphoshikimate = chorismate + phosphate. Its pathway is metabolic intermediate biosynthesis; chorismate biosynthesis; chorismate from D-erythrose 4-phosphate and phosphoenolpyruvate: step 7/7. Catalyzes the anti-1,4-elimination of the C-3 phosphate and the C-6 proR hydrogen from 5-enolpyruvylshikimate-3-phosphate (EPSP) to yield chorismate, which is the branch point compound that serves as the starting substrate for the three terminal pathways of aromatic amino acid biosynthesis. This reaction introduces a second double bond into the aromatic ring system. This Rhodopseudomonas palustris (strain BisB5) protein is Chorismate synthase.